The sequence spans 116 residues: Large ribosomal subunit protein uL18 (116 aa).

It belongs to the universal ribosomal protein uL18 family. In terms of assembly, part of the 50S ribosomal subunit; part of the 5S rRNA/L5/L18/L25 subcomplex. Contacts the 5S and 23S rRNAs.

Its function is as follows. This is one of the proteins that bind and probably mediate the attachment of the 5S RNA into the large ribosomal subunit, where it forms part of the central protuberance. The chain is Large ribosomal subunit protein uL18 from Shewanella loihica (strain ATCC BAA-1088 / PV-4).